Here is a 244-residue protein sequence, read N- to C-terminus: Biosynthetic peptidoglycan transglycosylase (244 aa).

A helical membrane pass occupies residues 23 to 43; it reads LVVIGAWLAGILLFSFLPVPF.

This sequence belongs to the glycosyltransferase 51 family.

The protein localises to the cell inner membrane. The enzyme catalyses [GlcNAc-(1-&gt;4)-Mur2Ac(oyl-L-Ala-gamma-D-Glu-L-Lys-D-Ala-D-Ala)](n)-di-trans,octa-cis-undecaprenyl diphosphate + beta-D-GlcNAc-(1-&gt;4)-Mur2Ac(oyl-L-Ala-gamma-D-Glu-L-Lys-D-Ala-D-Ala)-di-trans,octa-cis-undecaprenyl diphosphate = [GlcNAc-(1-&gt;4)-Mur2Ac(oyl-L-Ala-gamma-D-Glu-L-Lys-D-Ala-D-Ala)](n+1)-di-trans,octa-cis-undecaprenyl diphosphate + di-trans,octa-cis-undecaprenyl diphosphate + H(+). Its pathway is cell wall biogenesis; peptidoglycan biosynthesis. In terms of biological role, peptidoglycan polymerase that catalyzes glycan chain elongation from lipid-linked precursors. The protein is Biosynthetic peptidoglycan transglycosylase of Pectobacterium carotovorum subsp. carotovorum (strain PC1).